Here is a 352-residue protein sequence, read N- to C-terminus: Probable transcription factor At1g11510 (352 aa).

2 disordered regions span residues 1-132 (MSRR…GGEE) and 239-269 (MKSN…KNNC). Residues 56–66 (SGSDEETDSDS) are compositionally biased toward acidic residues. Composition is skewed to basic and acidic residues over residues 89–101 (KTSE…RSLE), 117–132 (VSGE…GGEE), and 241–259 (SNEK…HELD).

Belongs to the GeBP family.

This chain is Probable transcription factor At1g11510, found in Arabidopsis thaliana (Mouse-ear cress).